The sequence spans 155 residues: Large ribosomal subunit protein uL16 (155 aa).

This sequence belongs to the universal ribosomal protein uL16 family. As to quaternary structure, part of the 50S ribosomal subunit.

Binds 23S rRNA and is also seen to make contacts with the A and possibly P site tRNAs. The chain is Large ribosomal subunit protein uL16 from Synechococcus sp. (strain CC9311).